Consider the following 224-residue polypeptide: MWGSRIAVALRILVVLAILPVFLLLVYSLPFVRPVSTLMVKDYALLQGVNRQWVDIENIAPVLVNSVMMAEDGQFCSHGGVDWHQLGLVLDDAGDGGPSRGASTITMQMVKNLFLWNGRSYLRKGLEFPLALIADAVLSKKRIMEIYLNIAEWGPGIYGIEAAARHYFKRSAAKLTARQAALLAVTLPNPALRNPAKPTRNMQRIARIVAGRAMRSGPYVTCVK.

The chain crosses the membrane as a helical span at residues 12–32 (ILVVLAILPVFLLLVYSLPFV).

Belongs to the glycosyltransferase 51 family.

The protein localises to the cell inner membrane. It carries out the reaction [GlcNAc-(1-&gt;4)-Mur2Ac(oyl-L-Ala-gamma-D-Glu-L-Lys-D-Ala-D-Ala)](n)-di-trans,octa-cis-undecaprenyl diphosphate + beta-D-GlcNAc-(1-&gt;4)-Mur2Ac(oyl-L-Ala-gamma-D-Glu-L-Lys-D-Ala-D-Ala)-di-trans,octa-cis-undecaprenyl diphosphate = [GlcNAc-(1-&gt;4)-Mur2Ac(oyl-L-Ala-gamma-D-Glu-L-Lys-D-Ala-D-Ala)](n+1)-di-trans,octa-cis-undecaprenyl diphosphate + di-trans,octa-cis-undecaprenyl diphosphate + H(+). The protein operates within cell wall biogenesis; peptidoglycan biosynthesis. Functionally, peptidoglycan polymerase that catalyzes glycan chain elongation from lipid-linked precursors. This Brucella suis biovar 1 (strain 1330) protein is Biosynthetic peptidoglycan transglycosylase.